The primary structure comprises 598 residues: Thiamine transporter (598 aa).

Residues 1–41 are Cytoplasmic-facing; that stretch reads MSFGSKVSRALRFLEIPVKDRASVSFLKNPDLQPIKSANQT. A helical transmembrane segment spans residues 42-62; the sequence is WGFWSNFAYWGVMSFSVGTWM. Residues 63-73 lie on the Extracellular side of the membrane; it reads SASSALGVGLS. The chain crosses the membrane as a helical span at residues 74-94; the sequence is YPETIGTFIVGDVLTIIFTLA. Residues 95–111 lie on the Cytoplasmic side of the membrane; that stretch reads NSCPGYDWKVGFTLAQR. A helical transmembrane segment spans residues 112–132; that stretch reads FVFGIYGSAFGIIIRILMSIV. The Extracellular portion of the chain corresponds to 133–173; that stretch reads NYGSNAWVGGLCINMILDSWSHHYLHLPNTLSSKVAMTTKE. A helical membrane pass occupies residues 174–194; that stretch reads LIGFIIFHVLTAFCYLMKPYH. Residues 195–197 lie on the Cytoplasmic side of the membrane; that stretch reads MNY. A helical membrane pass occupies residues 198–218; that stretch reads ILIWSCVATFFSMLGMVIYLA. Residues 219 to 240 lie on the Extracellular side of the membrane; the sequence is KQAHGVGELFTSTKSTATGSTK. A helical transmembrane segment spans residues 241 to 261; it reads AWAWVYMISYWFGSVSPGSTN. The Cytoplasmic segment spans residues 262–274; sequence QSDYSRFGSSNWA. The helical transmembrane segment at 275-295 threads the bilayer; the sequence is IWAGTICALLIPTTLIPVFGV. The Extracellular portion of the chain corresponds to 296-332; that stretch reads IGASTCDKLYGEQYWMPMDIFNHWLTTNYSAGARAGA. The helical transmembrane segment at 333–353 threads the bilayer; that stretch reads FFCGLSFVLSQMSYTISNCGF. The Cytoplasmic portion of the chain corresponds to 354-371; sequence ASGMDLAGLLPKYVDIKR. The helical transmembrane segment at 372-392 threads the bilayer; it reads GALFAACVSWACLPWNFYNSS. The Extracellular portion of the chain corresponds to 393-394; sequence ST. A helical transmembrane segment spans residues 395 to 415; it reads FLTVMSSFGVVMTPIISVMIC. The Cytoplasmic portion of the chain corresponds to 416 to 446; sequence DNFLIRKRQYSITNAFILKGEYYFTKGVNWR. The chain crosses the membrane as a helical span at residues 447 to 467; it reads AIVAWVCGMTPGLPGIAWEVN. The Extracellular portion of the chain corresponds to 468-483; that stretch reads NDYFHNTGIVNFFYGD. Residues 484 to 504 traverse the membrane as a helical segment; that stretch reads SFFSFLISFFVYWGLCLLFPF. Topologically, residues 505-598 are cytoplasmic; it reads KITVKHDDKD…QSSTASEKAA (94 aa). The residue at position 560 (Ser560) is a Phosphoserine. The tract at residues 574 to 598 is disordered; it reads NTNEFEIVHHKNNEKQSSTASEKAA. Residues 588–598 show a composition bias toward polar residues; that stretch reads KQSSTASEKAA.

This sequence belongs to the purine-cytosine permease (2.A.39) family.

The protein resides in the membrane. Functionally, responsible for intake of thiamine. This Saccharomyces cerevisiae (strain ATCC 204508 / S288c) (Baker's yeast) protein is Thiamine transporter (THI7).